The chain runs to 507 residues: MASMVSFCFLLLFLAFFASSFNEIYAEESESKEFVLTLDKSNFFDTVSKHNFIVVEFYAPWCGHCKKLAPEYEKAASILSSHDPPVILAKVDANEEANKELASEFEVRGFPTIKILRNGGKIVQEYKGPRDADGIVDYLKKQSGPPSAEIKSIEDATNLVSEKKIVVVGIFPKFSGEEFENFSALAEKLRSDYEFGHTLDAKLLPRGESSVSGPVVRLFKPFDELFVDFQDFDVNALEKLVEESSVPTVTIFDKDPSNHPFVVKFFNNANAKAMLFLNFTSEVVESFRSIYREVAEKNKGEGISFLIGDTESSQGAFQYFGLRDDQVPLIVIQNNDGTKYLKPNLEPDHIASWVKEYKDCKLSPYRKSEPIPEHNNEPVKVVVADSLDEIVFKSGKNVLLEFYAPWCGHCKQLAPILDEVAVSFENDPDVLIAKLDATANDYPTNTFDVKGYPTLYFKSASGELLQYDGGRTKEDFIEFIEKNREKSSKKESIVKDDQTDSETKAEL.

The N-terminal stretch at 1-20 (MASMVSFCFLLLFLAFFASS) is a signal peptide. One can recognise a Thioredoxin 1 domain in the interval 21–144 (FNEIYAEESE…IVDYLKKQSG (124 aa)). Residues Cys-62 and Cys-65 each act as nucleophile in the active site. Residues Cys-62 and Cys-65 are joined by a disulfide bond. 2 N-linked (GlcNAc...) asparagine glycosylation sites follow: Asn-181 and Asn-278. Positions 365-485 (YRKSEPIPEH…FIEFIEKNRE (121 aa)) constitute a Thioredoxin 2 domain. Residues Cys-407 and Cys-410 each act as nucleophile in the active site. A disulfide bond links Cys-407 and Cys-410. Residues 484 to 507 (REKSSKKESIVKDDQTDSETKAEL) form a disordered region. The Prevents secretion from ER motif lies at 504–507 (KAEL).

The protein belongs to the protein disulfide isomerase family.

Its subcellular location is the endoplasmic reticulum lumen. It carries out the reaction Catalyzes the rearrangement of -S-S- bonds in proteins.. Its function is as follows. Participates in the folding of proteins containing disulfide bonds, may be involved in glycosylation, prolyl hydroxylation and triglyceride transfer. The chain is Protein disulfide-isomerase (PDI) from Datisca glomerata (Durango root).